A 202-amino-acid chain; its full sequence is Capsid protein (202 aa).

It belongs to the tymoviruses capsid protein family.

The protein resides in the virion. Its function is as follows. Self-assembles to form a T=3 icosahedral capsid composed of 180 copies of the capsid protein. The capsid encapsulates the single-stranded RNA genome. This Erysimum (ELV) protein is Capsid protein.